A 301-amino-acid polypeptide reads, in one-letter code: Probable alpha-L-glutamate ligase 1 (301 aa).

The ATP-grasp domain occupies 104–287 (LQLLSRKGIG…VTEPIVEYIE (184 aa)). Residues lysine 141, 178 to 179 (EY), aspartate 187, and 211 to 213 (RSN) each bind ATP. The Mg(2+) site is built by aspartate 248, glutamate 260, and asparagine 262. Mn(2+) contacts are provided by aspartate 248, glutamate 260, and asparagine 262.

It belongs to the RimK family. Requires Mg(2+) as cofactor. It depends on Mn(2+) as a cofactor.

The protein is Probable alpha-L-glutamate ligase 1 of Shewanella sp. (strain MR-4).